Reading from the N-terminus, the 456-residue chain is tRNA modification GTPase MnmE (456 aa).

(6S)-5-formyl-5,6,7,8-tetrahydrofolate is bound by residues Arg24, Glu81, and Lys120. Residues 216–379 (GMKVVIAGRP…LREHLKECIG (164 aa)) form the TrmE-type G domain. Asn226 is a binding site for K(+). GTP-binding positions include 226-231 (NAGKSS), 245-251 (TAIEGTT), and 270-273 (DTAG). Ser230 is a binding site for Mg(2+). K(+)-binding residues include Thr245, Ile247, and Thr250. Residue Thr251 coordinates Mg(2+). Residue Lys456 coordinates (6S)-5-formyl-5,6,7,8-tetrahydrofolate.

The protein belongs to the TRAFAC class TrmE-Era-EngA-EngB-Septin-like GTPase superfamily. TrmE GTPase family. In terms of assembly, homodimer. Heterotetramer of two MnmE and two MnmG subunits. Requires K(+) as cofactor.

It is found in the cytoplasm. Exhibits a very high intrinsic GTPase hydrolysis rate. Involved in the addition of a carboxymethylaminomethyl (cmnm) group at the wobble position (U34) of certain tRNAs, forming tRNA-cmnm(5)s(2)U34. This chain is tRNA modification GTPase MnmE, found in Marinobacter nauticus (strain ATCC 700491 / DSM 11845 / VT8) (Marinobacter aquaeolei).